The sequence spans 353 residues: ATPase GET3A (353 aa).

27–34 (KGGVGKTT) is a binding site for ATP. Residue Asp56 is part of the active site. Positions 226 and 253 each coordinate ATP. Residues 320–353 (TTSRSNVEELERKVHTLRLQLKTAEEELERVKSG) are a coiled coil.

This sequence belongs to the arsA ATPase family. Homodimer. Interacts with GET1 and GET4.

The protein resides in the cytoplasm. It localises to the cytosol. Its subcellular location is the endoplasmic reticulum. It catalyses the reaction ATP + H2O = ADP + phosphate + H(+). ATPase required for the post-translational delivery of tail-anchored (TA) proteins to the endoplasmic reticulum. Recognizes and selectively binds the transmembrane domain of TA proteins in the cytosol. This complex then targets to the endoplasmic reticulum by membrane-bound receptors, where the tail-anchored protein is released for insertion. This process is regulated by ATP binding and hydrolysis. ATP binding drives the homodimer towards the closed dimer state, facilitating recognition of newly synthesized TA membrane proteins. ATP hydrolysis is required for insertion. Subsequently, the homodimer reverts towards the open dimer state, lowering its affinity for the membrane-bound receptor, and returning it to the cytosol to initiate a new round of targeting. Involved in the control of root hair growth through the regulation of syntaxin SYP123 expression. This is ATPase GET3A from Arabidopsis thaliana (Mouse-ear cress).